Consider the following 186-residue polypeptide: Peptidyl-tRNA hydrolase (186 aa).

A tRNA-binding site is contributed by Tyr-14. Residue His-19 is the Proton acceptor of the active site. 3 residues coordinate tRNA: Phe-64, Asn-66, and Asn-112.

The protein belongs to the PTH family. In terms of assembly, monomer.

It is found in the cytoplasm. The enzyme catalyses an N-acyl-L-alpha-aminoacyl-tRNA + H2O = an N-acyl-L-amino acid + a tRNA + H(+). Its function is as follows. Hydrolyzes ribosome-free peptidyl-tRNAs (with 1 or more amino acids incorporated), which drop off the ribosome during protein synthesis, or as a result of ribosome stalling. Functionally, catalyzes the release of premature peptidyl moieties from peptidyl-tRNA molecules trapped in stalled 50S ribosomal subunits, and thus maintains levels of free tRNAs and 50S ribosomes. The chain is Peptidyl-tRNA hydrolase from Listeria monocytogenes serovar 1/2a (strain ATCC BAA-679 / EGD-e).